The primary structure comprises 54 residues: Small ribosomal subunit protein uS14 (54 aa).

Residues cysteine 19, cysteine 22, cysteine 37, and cysteine 40 each contribute to the Zn(2+) site.

It belongs to the universal ribosomal protein uS14 family. Zinc-binding uS14 subfamily. Part of the 30S ribosomal subunit. It depends on Zn(2+) as a cofactor.

Binds 16S rRNA, required for the assembly of 30S particles. The polypeptide is Small ribosomal subunit protein uS14 (Sulfolobus acidocaldarius (strain ATCC 33909 / DSM 639 / JCM 8929 / NBRC 15157 / NCIMB 11770)).